Reading from the N-terminus, the 357-residue chain is DNA replication and repair protein RecF (357 aa).

An ATP-binding site is contributed by 31-38 (GQNGAGKT).

This sequence belongs to the RecF family.

The protein localises to the cytoplasm. In terms of biological role, the RecF protein is involved in DNA metabolism; it is required for DNA replication and normal SOS inducibility. RecF binds preferentially to single-stranded, linear DNA. It also seems to bind ATP. This Coxiella burnetii (strain CbuK_Q154) (Coxiella burnetii (strain Q154)) protein is DNA replication and repair protein RecF.